We begin with the raw amino-acid sequence, 86 residues long: ATP synthase subunit c (86 aa).

The next 2 helical transmembrane spans lie at 4–24 (AIVA…GIGA) and 57–77 (VAIA…LLFV).

This sequence belongs to the ATPase C chain family. As to quaternary structure, F-type ATPases have 2 components, F(1) - the catalytic core - and F(0) - the membrane proton channel. F(1) has five subunits: alpha(3), beta(3), gamma(1), delta(1), epsilon(1). F(0) has three main subunits: a(1), b(2) and c(10-14). The alpha and beta chains form an alternating ring which encloses part of the gamma chain. F(1) is attached to F(0) by a central stalk formed by the gamma and epsilon chains, while a peripheral stalk is formed by the delta and b chains.

Its subcellular location is the cell membrane. F(1)F(0) ATP synthase produces ATP from ADP in the presence of a proton or sodium gradient. F-type ATPases consist of two structural domains, F(1) containing the extramembraneous catalytic core and F(0) containing the membrane proton channel, linked together by a central stalk and a peripheral stalk. During catalysis, ATP synthesis in the catalytic domain of F(1) is coupled via a rotary mechanism of the central stalk subunits to proton translocation. In terms of biological role, key component of the F(0) channel; it plays a direct role in translocation across the membrane. A homomeric c-ring of between 10-14 subunits forms the central stalk rotor element with the F(1) delta and epsilon subunits. In Clostridioides difficile (strain 630) (Peptoclostridium difficile), this protein is ATP synthase subunit c.